A 161-amino-acid polypeptide reads, in one-letter code: Allophycocyanin beta chain (161 aa).

An N4-methylasparagine modification is found at asparagine 71. Cysteine 81 provides a ligand contact to (2R,3E)-phycocyanobilin.

It belongs to the phycobiliprotein family. Heterodimer of an alpha and a beta chain. Post-translationally, contains one covalently linked phycocyanobilin chromophore.

Its subcellular location is the cellular thylakoid membrane. Light-harvesting photosynthetic bile pigment-protein from the phycobiliprotein complex. Allophycocyanin has a maximum absorption at approximately 650 nanometers. This is Allophycocyanin beta chain (apcB) from Thermosynechococcus vestitus (strain NIES-2133 / IAM M-273 / BP-1).